Reading from the N-terminus, the 284-residue chain is Phosphonates import ATP-binding protein PhnC 1 (284 aa).

Residues 5 to 253 form the ABC transporter domain; it reads IEVRGLSKSF…MLRDLYGSEA (249 aa). 38-45 contacts ATP; that stretch reads GASGSGKS.

This sequence belongs to the ABC transporter superfamily. Phosphonates importer (TC 3.A.1.9.1) family. In terms of assembly, the complex is composed of two ATP-binding proteins (PhnC), two transmembrane proteins (PhnE) and a solute-binding protein (PhnD).

Its subcellular location is the cell inner membrane. The enzyme catalyses phosphonate(out) + ATP + H2O = phosphonate(in) + ADP + phosphate + H(+). Its function is as follows. Part of the ABC transporter complex PhnCDE involved in phosphonates import. Responsible for energy coupling to the transport system. This chain is Phosphonates import ATP-binding protein PhnC 1, found in Cupriavidus metallidurans (strain ATCC 43123 / DSM 2839 / NBRC 102507 / CH34) (Ralstonia metallidurans).